A 934-amino-acid chain; its full sequence is Protein translocase subunit SecA (934 aa).

ATP is bound by residues Gln90, 108–112, and Asp509; that span reads GEGKT. Residues 535–565 are disordered; sequence PEEDHTPPVPLQRSAPGGFSDAAAPSLPRSG.

It belongs to the SecA family. As to quaternary structure, monomer and homodimer. Part of the essential Sec protein translocation apparatus which comprises SecA, SecYEG and auxiliary proteins SecDF. Other proteins may also be involved.

The protein resides in the cell inner membrane. It localises to the cellular thylakoid membrane. The protein localises to the cytoplasm. The catalysed reaction is ATP + H2O + cellular proteinSide 1 = ADP + phosphate + cellular proteinSide 2.. In terms of biological role, part of the Sec protein translocase complex. Interacts with the SecYEG preprotein conducting channel. Has a central role in coupling the hydrolysis of ATP to the transfer of proteins into and across the cell membrane, serving as an ATP-driven molecular motor driving the stepwise translocation of polypeptide chains across the membrane. Functionally, probably participates in protein translocation into and across both the cytoplasmic and thylakoid membranes in cyanobacterial cells. This Synechococcus sp. (strain CC9605) protein is Protein translocase subunit SecA.